We begin with the raw amino-acid sequence, 217 residues long: Somatotropin (217 aa).

An N-terminal signal peptide occupies residues 1–27 (MMAAGPRTSLLLAFALLCLPWTQMVGA). Histidine 46 contributes to the Zn(2+) binding site. Cysteine 79 and cysteine 190 are disulfide-bonded. Residue serine 132 is modified to Phosphoserine. Glutamate 199 contacts Zn(2+). Cysteine 207 and cysteine 215 form a disulfide bridge.

Belongs to the somatotropin/prolactin family.

It is found in the secreted. Functionally, plays an important role in growth control. Its major role in stimulating body growth is to stimulate the liver and other tissues to secrete IGF1. It stimulates both the differentiation and proliferation of myoblasts. It also stimulates amino acid uptake and protein synthesis in muscle and other tissues. The chain is Somatotropin (GH1) from Giraffa camelopardalis (Giraffe).